The following is a 392-amino-acid chain: Fasciculation and elongation protein zeta-1 (392 aa).

A disordered region spans residues 1 to 37; that stretch reads MEAPLVSLDEEFEDLRPSCSEDPEEKPQCFYGSSPHH. Residue Ser58 is modified to Phosphoserine. The disordered stretch occupies residues 175–198; sequence MQNSPDPEEEEEVLEEEDGGETSS. The span at 180–194 shows a compositional bias: acidic residues; it reads DPEEEEEVLEEEDGG. A coiled-coil region spans residues 230–298; sequence SELTELLDQV…KKRRKEKGLS (69 aa). Phosphoserine is present on residues Ser298 and Ser316.

This sequence belongs to the zygin family. In terms of assembly, homodimer; disulfide-linked. May form heterodimers with FEZ2. Interacts with the NH2-terminal variable region (V1) of PKC zeta and weakly with that of PKC epsilon. Interacts with UBE4B. Interacts with SAP30L. Interacts with SCOC and ULK1; SCOC interferes with ULK1-binding to FEZ1. Directly interacts with SCOC and UVRAG. Stabilizes the interaction between SCOC and UVRAG during amino acid starvation. Post-translationally, phosphorylated by protein kinase C zeta; which enhances interaction with UBE4B and polyubiquitination. In terms of processing, polyubiquitinated in a UBE4B-dependent manner; which does not lead to proteasomal degradation and may be important for neurogenic activity. Polyubiquitin linkage seems to be mainly through Lys-26. In terms of tissue distribution, mainly expressed in brain.

The protein localises to the cytoplasm. It is found in the cytoskeleton. It localises to the microtubule organizing center. The protein resides in the centrosome. Its subcellular location is the cell membrane. In terms of biological role, may be involved in axonal outgrowth as component of the network of molecules that regulate cellular morphology and axon guidance machinery. Able to restore partial locomotion and axonal fasciculation to C.elegans unc-76 mutants in germline transformation experiments. May participate in the transport of mitochondria and other cargos along microtubules. This chain is Fasciculation and elongation protein zeta-1 (FEZ1), found in Homo sapiens (Human).